A 261-amino-acid chain; its full sequence is Cytochrome c oxidase subunit 3 (261 aa).

Over 1–15 (MTHQTHAYHMVNPSP) the chain is Mitochondrial matrix. The helical transmembrane segment at 16-34 (WPLTGAMSALLLTSGLIMW) threads the bilayer. Residues 35–40 (FHFNSY) lie on the Mitochondrial intermembrane side of the membrane. Residues 41–66 (TLLLLGLLTNLISSYQWWRDIVREGT) traverse the membrane as a helical segment. Residues 67–72 (YQGHHT) lie on the Mitochondrial matrix side of the membrane. The chain crosses the membrane as a helical span at residues 73–105 (KIVQKGLRYGMILFIISEVFFFLGFFWAFYHSS). At 106–128 (LAPTPELGGCWPPTGISPLNPLE) the chain is on the mitochondrial intermembrane side. The helical transmembrane segment at 129-152 (VPLLNTSILLASGVSITWAHHSLM) threads the bilayer. Residues 153-155 (EGN) lie on the Mitochondrial matrix side of the membrane. Residues 156 to 183 (RKQMLQALTITIALGLYFTALQAMEYYE) form a helical membrane-spanning segment. Over 184–190 (ASFTISD) the chain is Mitochondrial intermembrane. The chain crosses the membrane as a helical span at residues 191–223 (GVYGSTFFVATGFHGLHVIIGTTFLITCLVRQT). Topologically, residues 224 to 232 (LYHFTSNHH) are mitochondrial matrix. A helical transmembrane segment spans residues 233–256 (FGFEAAAWYWHFVDVVWLFLYVSI). The Mitochondrial intermembrane portion of the chain corresponds to 257–261 (YWWGS).

Belongs to the cytochrome c oxidase subunit 3 family. As to quaternary structure, component of the cytochrome c oxidase (complex IV, CIV), a multisubunit enzyme composed of 14 subunits. The complex is composed of a catalytic core of 3 subunits MT-CO1, MT-CO2 and MT-CO3, encoded in the mitochondrial DNA, and 11 supernumerary subunits COX4I, COX5A, COX5B, COX6A, COX6B, COX6C, COX7A, COX7B, COX7C, COX8 and NDUFA4, which are encoded in the nuclear genome. The complex exists as a monomer or a dimer and forms supercomplexes (SCs) in the inner mitochondrial membrane with NADH-ubiquinone oxidoreductase (complex I, CI) and ubiquinol-cytochrome c oxidoreductase (cytochrome b-c1 complex, complex III, CIII), resulting in different assemblies (supercomplex SCI(1)III(2)IV(1) and megacomplex MCI(2)III(2)IV(2)).

The protein localises to the mitochondrion inner membrane. It carries out the reaction 4 Fe(II)-[cytochrome c] + O2 + 8 H(+)(in) = 4 Fe(III)-[cytochrome c] + 2 H2O + 4 H(+)(out). Component of the cytochrome c oxidase, the last enzyme in the mitochondrial electron transport chain which drives oxidative phosphorylation. The respiratory chain contains 3 multisubunit complexes succinate dehydrogenase (complex II, CII), ubiquinol-cytochrome c oxidoreductase (cytochrome b-c1 complex, complex III, CIII) and cytochrome c oxidase (complex IV, CIV), that cooperate to transfer electrons derived from NADH and succinate to molecular oxygen, creating an electrochemical gradient over the inner membrane that drives transmembrane transport and the ATP synthase. Cytochrome c oxidase is the component of the respiratory chain that catalyzes the reduction of oxygen to water. Electrons originating from reduced cytochrome c in the intermembrane space (IMS) are transferred via the dinuclear copper A center (CU(A)) of subunit 2 and heme A of subunit 1 to the active site in subunit 1, a binuclear center (BNC) formed by heme A3 and copper B (CU(B)). The BNC reduces molecular oxygen to 2 water molecules using 4 electrons from cytochrome c in the IMS and 4 protons from the mitochondrial matrix. This Ornithorhynchus anatinus (Duckbill platypus) protein is Cytochrome c oxidase subunit 3 (MT-CO3).